Consider the following 1071-residue polypeptide: Exportin-1 (1071 aa).

The 67-residue stretch at 46–112 folds into the Importin N-terminal domain; it reads AQEVLTHLKE…KKYVVGLIIK (67 aa). 6 HEAT repeats span residues 217–240, 241–277, 354–472, 515–553, 560–597, and 602–639; these read QNAPLVHATLETLLRFLNWIPLGY, IFETKLISTLIYKFLNVPMFRNVSLKCLTEIAGVSVS, MLLV…YVDT, RFLVTVIKDLLGLCEQKRGKDNKAIIASNIMYIVGQYPR, KFLKTVVNKLFEFMHETHDGVQDMACDTFIKIAQKCRR, and VQVGEVMPFIDEILNNINTIICDLQPQQVHTFYEAVGY. Residues 327–450 form a necessary for interaction with Ran and nuclear export complex formation region; the sequence is CTFLKEHGQL…VREFMKDTDS (124 aa). Ser391 carries the post-translational modification Phosphoserine. Residues 411 to 481 form a necessary for interaction with RANBP3 region; the sequence is TVLSKVRLLM…TEIIMTKKLQ (71 aa). Residue Lys446 is modified to N6-acetyllysine. Thr448 carries the phosphothreonine modification. Ser450 carries the phosphoserine modification. At Tyr454 the chain carries Phosphotyrosine. Residue Lys693 is modified to N6-acetyllysine. 3 HEAT repeats span residues 775–813, 885–916, and 917–954; these read NFVPPLLDAVLIDYQRNVPAAREPEVLSTMAIIVNKLGG, TMRNVADTGLQILFTLLQNVAQEEAAAQSFYQ, and TYFCDILQHIFSVVTDTSHTAGLTMHASILAYMFNLVE. 2 positions are modified to phosphoserine: Ser966 and Ser1031. The stretch at 1002–1039 is one HEAT 10 repeat; it reads FSLNQDIPAFKEHLRDFLVQIKEFAGEDTSDLFLEERE.

Belongs to the exportin family. Found in a U snRNA export complex with PHAX/RNUXA, NCBP1/CBP80, NCBP2/CBP20, RAN, XPO1 and m7G-capped RNA. Component of a nuclear export receptor complex composed of KPNB1, RAN, SNUPN and XPO1. Found in a trimeric export complex with SNUPN, RAN and XPO1. Found in a nuclear export complex with RANBP3 and RAN. Found in a 60S ribosomal subunit export complex with NMD3, RAN, XPO1. Interacts with DDX3X, NMD3, NUP42, NUP88, NUP214, RANBP3 and TERT. Interacts with NEMF (via its N-terminus). Interacts with the monomeric form of BIRC5/survivin deacetylated at 'Lys-129'. Interacts with DTNBP1 and SERTAD2; the interactions translocate DTNBP1 and SERTAD2 out of the nucleus. Interacts with ATF2. Interacts with SLC35G1 and STIM1. Interacts with DCAF8. Interacts with CPEB3. Interacts with HAX1. Interacts with BOK; translocates to the cytoplasm. Interacts with HSP90AB1. Interacts with LRPPRC; interacts with LRPPRC alone and also when LRPPRC is in complex with EIF4E and with EIF4E sensitivity element (4ESE)-containing mRNAs to form an EIF4E-dependent mRNA export complex.

The protein resides in the cytoplasm. The protein localises to the nucleus. It localises to the nucleoplasm. Its subcellular location is the cajal body. It is found in the nucleolus. Its function is as follows. Mediates the nuclear export of cellular proteins (cargos) bearing a leucine-rich nuclear export signal (NES) and of RNAs. In the nucleus, in association with RANBP3, binds cooperatively to the NES on its target protein and to the GTPase Ran in its active GTP-bound form. Docking of this complex to the nuclear pore complex (NPC) is mediated through binding to nucleoporins. Upon transit of a nuclear export complex into the cytoplasm, disassembling of the complex and hydrolysis of Ran-GTP to Ran-GDP (induced by RANBP1 and RANGAP1, respectively) cause release of the cargo from the export receptor. The directionality of nuclear export is thought to be conferred by an asymmetric distribution of the GTP- and GDP-bound forms of Ran between the cytoplasm and nucleus. Involved in U3 snoRNA transport from Cajal bodies to nucleoli. Binds to late precursor U3 snoRNA bearing a TMG cap. The protein is Exportin-1 (Xpo1) of Rattus norvegicus (Rat).